Here is a 485-residue protein sequence, read N- to C-terminus: MTDIINKLQAFADANPQSIAVRHTTDELTYQQLMDESSKLAHRLQGSKKPMILFGHMSPYMIVGMIGAIKAGCGYVPVDTSIPEDRIKMIINKVQPEFVFNTTDESFESLEGEVFTIEDIKTSQDPVIFDSQIKDNDTVYTIFTSGSTGEPKGVQIEYASLVQFTEWMLELNKSGNKQQWLNQAPFSFDLSVMAIYPCLASGGTLNLVDKNMINKPKLLNEMLTATPINIWVSTPSFMEMCLLLPTLNEEQYGSLNEFFFCGEILPHRAAKALVSRFPSATIYNTYGPTEATVAVTSIQITQEILDQYPTLPVGVERLGARLSTTDDGELVIEGQSVSLGYLKNDQKTAEVFNFDDGIRTYHTGDKAKFENGQWFIQGRIDFQIKLNGYRMELEEIETQLRQSEFVKEAIVVPVYKNDKVIHLIGAIVPTTEVTDNAEMTKNIKNDLKSRLPEYMIPRKFEWMEQLPLTSNGKIDRKKIAEVING.

144–145 (TS) is a binding site for ATP. Aspartate 189 is a binding site for D-alanine. 284–289 (NTYGPT) lines the ATP pocket. Residue valine 293 participates in D-alanine binding. ATP is bound by residues aspartate 365 and lysine 473. Residue lysine 473 coordinates D-alanine.

It belongs to the ATP-dependent AMP-binding enzyme family. DltA subfamily.

It localises to the cytoplasm. The catalysed reaction is holo-[D-alanyl-carrier protein] + D-alanine + ATP = D-alanyl-[D-alanyl-carrier protein] + AMP + diphosphate. Its pathway is cell wall biogenesis; lipoteichoic acid biosynthesis. Functionally, catalyzes the first step in the D-alanylation of lipoteichoic acid (LTA), the activation of D-alanine and its transfer onto the D-alanyl carrier protein (Dcp) DltC. In an ATP-dependent two-step reaction, forms a high energy D-alanyl-AMP intermediate, followed by transfer of the D-alanyl residue as a thiol ester to the phosphopantheinyl prosthetic group of the Dcp. D-alanylation of LTA plays an important role in modulating the properties of the cell wall in Gram-positive bacteria, influencing the net charge of the cell wall. The chain is D-alanine--D-alanyl carrier protein ligase from Staphylococcus aureus (strain Mu3 / ATCC 700698).